A 317-amino-acid polypeptide reads, in one-letter code: Transaldolase (317 aa).

The active-site Schiff-base intermediate with substrate is the Lys-132.

Belongs to the transaldolase family. Type 1 subfamily. In terms of assembly, homodimer.

The protein localises to the cytoplasm. It carries out the reaction D-sedoheptulose 7-phosphate + D-glyceraldehyde 3-phosphate = D-erythrose 4-phosphate + beta-D-fructose 6-phosphate. It functions in the pathway carbohydrate degradation; pentose phosphate pathway; D-glyceraldehyde 3-phosphate and beta-D-fructose 6-phosphate from D-ribose 5-phosphate and D-xylulose 5-phosphate (non-oxidative stage): step 2/3. In terms of biological role, transaldolase is important for the balance of metabolites in the pentose-phosphate pathway. The polypeptide is Transaldolase (talB) (Escherichia coli O104:H4 (strain 2009EL-2071)).